The chain runs to 405 residues: L-carnitine CoA-transferase (405 aa).

CoA contacts are provided by Lys97 and Arg104. Asp169 functions as the Nucleophile in the catalytic mechanism.

This sequence belongs to the CoA-transferase III family. CaiB subfamily. In terms of assembly, homodimer.

The protein localises to the cytoplasm. It catalyses the reaction crotonobetainyl-CoA + (R)-carnitine = crotonobetaine + (R)-carnitinyl-CoA. The catalysed reaction is 4-(trimethylamino)butanoyl-CoA + (R)-carnitine = (R)-carnitinyl-CoA + 4-(trimethylamino)butanoate. Its pathway is amine and polyamine metabolism; carnitine metabolism. Catalyzes the reversible transfer of the CoA moiety from gamma-butyrobetainyl-CoA to L-carnitine to generate L-carnitinyl-CoA and gamma-butyrobetaine. Is also able to catalyze the reversible transfer of the CoA moiety from gamma-butyrobetainyl-CoA or L-carnitinyl-CoA to crotonobetaine to generate crotonobetainyl-CoA. This Escherichia coli O7:K1 (strain IAI39 / ExPEC) protein is L-carnitine CoA-transferase.